The sequence spans 691 residues: WD repeat-containing protein 48 homolog (691 aa).

WD repeat units follow at residues 27–82 (LHRS…PVQY), 88–130 (RHTD…YLDS), 133–168 (LHTD…NSNF), 180–219 (GCKN…KPMK), 222–261 (GHSD…NIAT), 264–303 (AHEE…KFQV), 306–347 (KEEA…QNSN), and 399–438 (SGAP…KVKE).

The protein belongs to the WD repeat WDR48 family. In terms of assembly, interacts with usp-46; the interaction increases the catalytic activity of usp-46 in the presence of wdr-20.

Its function is as follows. Together with wdr-20, binds to and stimulates the activity of the deubiquitinating enzyme usp-46, leading to deubiquitination and stabilization of the glr-1 glutamate receptor. This chain is WD repeat-containing protein 48 homolog (wdr-48), found in Caenorhabditis briggsae.